The primary structure comprises 248 residues: Protein canopy homolog 4 (248 aa).

A signal peptide spans 1 to 21; the sequence is MGPVRLGILLFLFLAVHEAWA. 3 disulfide bridges follow: cysteine 38–cysteine 196, cysteine 41–cysteine 184, and cysteine 94–cysteine 156. Residues 200 to 248 form a disordered region; sequence TWTGKEITDGEEKTEGEEEQEEEEEEEEEEGGDKMTKTGSHPKLDREDL. A compositionally biased stretch (acidic residues) spans 213–230; the sequence is TEGEEEQEEEEEEEEEEG. The segment covering 231–248 has biased composition (basic and acidic residues); that stretch reads GDKMTKTGSHPKLDREDL.

The protein belongs to the canopy family. As to quaternary structure, interacts with TLR4.

The protein resides in the secreted. Functionally, plays a role in the regulation of the cell surface expression of TLR4. This chain is Protein canopy homolog 4 (CNPY4), found in Homo sapiens (Human).